The sequence spans 314 residues: tRNA-cytidine(32) 2-sulfurtransferase (314 aa).

The short motif at 57–62 (SGGKDS) is the PP-loop motif element. 3 residues coordinate [4Fe-4S] cluster: Cys132, Cys135, and Cys223.

This sequence belongs to the TtcA family. As to quaternary structure, homodimer. Requires Mg(2+) as cofactor. It depends on [4Fe-4S] cluster as a cofactor.

It is found in the cytoplasm. It catalyses the reaction cytidine(32) in tRNA + S-sulfanyl-L-cysteinyl-[cysteine desulfurase] + AH2 + ATP = 2-thiocytidine(32) in tRNA + L-cysteinyl-[cysteine desulfurase] + A + AMP + diphosphate + H(+). It participates in tRNA modification. Catalyzes the ATP-dependent 2-thiolation of cytidine in position 32 of tRNA, to form 2-thiocytidine (s(2)C32). The sulfur atoms are provided by the cysteine/cysteine desulfurase (IscS) system. This is tRNA-cytidine(32) 2-sulfurtransferase from Alkalilimnicola ehrlichii (strain ATCC BAA-1101 / DSM 17681 / MLHE-1).